Consider the following 346-residue polypeptide: GTPase Obg (346 aa).

The 159-residue stretch at 1 to 159 folds into the Obg domain; it reads MKFLDSAKIY…RTVLLRLKLI (159 aa). Positions 160–327 constitute an OBG-type G domain; the sequence is ADAGLVGLPN…ALRAVLAEID (168 aa). Residues 166–173, 191–195, 212–215, 279–282, and 308–310 contribute to the GTP site; these read GLPNAGKS, FTTLN, DIPG, SKVD, and SAA. Positions 173 and 193 each coordinate Mg(2+).

It belongs to the TRAFAC class OBG-HflX-like GTPase superfamily. OBG GTPase family. In terms of assembly, monomer. Mg(2+) is required as a cofactor.

It is found in the cytoplasm. Its function is as follows. An essential GTPase which binds GTP, GDP and possibly (p)ppGpp with moderate affinity, with high nucleotide exchange rates and a fairly low GTP hydrolysis rate. Plays a role in control of the cell cycle, stress response, ribosome biogenesis and in those bacteria that undergo differentiation, in morphogenesis control. In Methylocella silvestris (strain DSM 15510 / CIP 108128 / LMG 27833 / NCIMB 13906 / BL2), this protein is GTPase Obg.